The chain runs to 260 residues: UPF0246 protein Bcep1808_2308 (260 aa).

The protein belongs to the UPF0246 family.

The protein is UPF0246 protein Bcep1808_2308 of Burkholderia vietnamiensis (strain G4 / LMG 22486) (Burkholderia cepacia (strain R1808)).